Reading from the N-terminus, the 446-residue chain is NADH-ubiquinone oxidoreductase chain 4 (446 aa).

The next 13 helical transmembrane spans lie at 4–24 (IILF…YWMV), 56–76 (MLSY…LLAS), 93–113 (IVIL…FMFY), 114–134 (LFFE…GYQP), 141–161 (VYLL…IFYV), 182–202 (LLYF…LVHL), 212–232 (PVSG…YGLL), 245–265 (YSFV…LVCL), 272–292 (ALIA…LLTM), 297–317 (LCGS…LFCL), 330–350 (MLIN…WFLL), 373–393 (IVSW…FSAA), and 426–446 (LLHW…ILWL).

The protein belongs to the complex I subunit 4 family.

The protein resides in the mitochondrion membrane. The catalysed reaction is a ubiquinone + NADH + 5 H(+)(in) = a ubiquinol + NAD(+) + 4 H(+)(out). Functionally, core subunit of the mitochondrial membrane respiratory chain NADH dehydrogenase (Complex I) that is believed to belong to the minimal assembly required for catalysis. Complex I functions in the transfer of electrons from NADH to the respiratory chain. The immediate electron acceptor for the enzyme is believed to be ubiquinone. The protein is NADH-ubiquinone oxidoreductase chain 4 (mt:ND4) of Drosophila yakuba (Fruit fly).